The chain runs to 433 residues: Tol-Pal system protein TolB (433 aa).

A signal peptide spans 1–21 (MRNLLRGMLVVICCMAGIAAA).

This sequence belongs to the TolB family. As to quaternary structure, the Tol-Pal system is composed of five core proteins: the inner membrane proteins TolA, TolQ and TolR, the periplasmic protein TolB and the outer membrane protein Pal. They form a network linking the inner and outer membranes and the peptidoglycan layer.

It localises to the periplasm. Its function is as follows. Part of the Tol-Pal system, which plays a role in outer membrane invagination during cell division and is important for maintaining outer membrane integrity. The chain is Tol-Pal system protein TolB from Pseudomonas fluorescens (strain SBW25).